The primary structure comprises 476 residues: Serine/threonine-protein kinase PknF (476 aa).

One can recognise a Protein kinase domain in the interval 12–279 (FTIVRQLGSG…FARALGHRLG (268 aa)). ATP contacts are provided by residues 18-26 (LGSGGMGEV) and Lys41. Asp137 functions as the Proton acceptor in the catalytic mechanism. Residues 306–326 (TAVIVPAVLAMLLVMAVAVAV) traverse the membrane as a helical segment. The disordered stretch occupies residues 332–376 (ADDERAAQPARTRTTTSAGTTTSVAPASTTRPAPTTPTTTGAADT). Residues 338-376 (AQPARTRTTTSAGTTTSVAPASTTRPAPTTPTTTGAADT) show a composition bias toward low complexity.

It belongs to the protein kinase superfamily. Ser/Thr protein kinase family. In terms of processing, autophosphorylated. Dephosphorylated by PstP.

The protein localises to the cell membrane. The catalysed reaction is L-seryl-[protein] + ATP = O-phospho-L-seryl-[protein] + ADP + H(+). The enzyme catalyses L-threonyl-[protein] + ATP = O-phospho-L-threonyl-[protein] + ADP + H(+). In terms of biological role, a serine/threonine-protein kinase, acts on HupB in vitro. This Mycobacterium tuberculosis (strain ATCC 25177 / H37Ra) protein is Serine/threonine-protein kinase PknF.